A 174-amino-acid polypeptide reads, in one-letter code: Protein GrpE (174 aa).

It belongs to the GrpE family. Homodimer.

The protein localises to the cytoplasm. Its function is as follows. Participates actively in the response to hyperosmotic and heat shock by preventing the aggregation of stress-denatured proteins, in association with DnaK and GrpE. It is the nucleotide exchange factor for DnaK and may function as a thermosensor. Unfolded proteins bind initially to DnaJ; upon interaction with the DnaJ-bound protein, DnaK hydrolyzes its bound ATP, resulting in the formation of a stable complex. GrpE releases ADP from DnaK; ATP binding to DnaK triggers the release of the substrate protein, thus completing the reaction cycle. Several rounds of ATP-dependent interactions between DnaJ, DnaK and GrpE are required for fully efficient folding. The polypeptide is Protein GrpE (Pseudothermotoga lettingae (strain ATCC BAA-301 / DSM 14385 / NBRC 107922 / TMO) (Thermotoga lettingae)).